Here is a 71-residue protein sequence, read N- to C-terminus: Beta-defensin 25 (71 aa).

The first 22 residues, 1 to 22 (MAKWILLIVALLVLGHVPSGST), serve as a signal peptide directing secretion. Cystine bridges form between cysteine 27/cysteine 54, cysteine 34/cysteine 48, and cysteine 38/cysteine 55.

It belongs to the beta-defensin family.

The protein localises to the secreted. Has antibacterial activity. This Rattus norvegicus (Rat) protein is Beta-defensin 25 (Defb25).